Consider the following 306-residue polypeptide: Glutaminase (306 aa).

Residues S64, N115, E159, N166, Y190, Y242, and V260 each contribute to the substrate site.

Belongs to the glutaminase family. As to quaternary structure, homotetramer.

It carries out the reaction L-glutamine + H2O = L-glutamate + NH4(+). The polypeptide is Glutaminase (Vibrio parahaemolyticus serotype O3:K6 (strain RIMD 2210633)).